A 371-amino-acid chain; its full sequence is Galanin receptor type 2 (371 aa).

The Extracellular portion of the chain corresponds to 1-27; sequence MNGSDSQGAEDSSQEGGGGWQPEAVLV. N-linked (GlcNAc...) asparagine glycosylation is present at N2. Residues 28–48 traverse the membrane as a helical segment; it reads PLFFALIFLVGAVGNALVLAV. Residues 49–59 are Cytoplasmic-facing; that stretch reads LLRGGQAVSTT. A helical transmembrane segment spans residues 60–80; it reads NLFILNLGVADLCFILCCVPF. Residues 81 to 98 are Extracellular-facing; it reads QATIYTLDDWVFGSLLCK. Cysteines 97 and 174 form a disulfide. A helical transmembrane segment spans residues 99 to 120; that stretch reads AVHFLIFLTMHASSFTLAAVSL. Over 121-140 the chain is Cytoplasmic; that stretch reads DRYLAIRYPLHSRELRTPRN. The helical transmembrane segment at 141 to 161 threads the bilayer; the sequence is ALAAIGLIWGLALLFSGPYLS. The Extracellular portion of the chain corresponds to 162–186; sequence YYSQSQLANLTVCHPAWSAPRRRAM. Residues 187–207 form a helical membrane-spanning segment; it reads DLCTFVFSYLLPVLVLSLTYA. Residues 208–236 lie on the Cytoplasmic side of the membrane; it reads RTLHYLWRTVDPVAAGSGSQRAKRKVTRM. Residues 237–257 traverse the membrane as a helical segment; that stretch reads IVIVAVLFCLCWMPHHALILC. Residues 258–259 lie on the Extracellular side of the membrane; that stretch reads VW. A helical transmembrane segment spans residues 260-280; it reads FGRFPLTRATYALRILSHLVS. Topologically, residues 281 to 371 are cytoplasmic; it reads YANSCVNPIV…TLSRTLDPAC (91 aa).

Belongs to the G-protein coupled receptor 1 family.

The protein localises to the cell membrane. Receptor for the hormone galanin, GALP and spexin-1. The activity of this receptor is mediated by G proteins that activate the phospholipase C/protein kinase C pathway (via G(q)) and that inhibit adenylyl cyclase (via G(i)). This is Galanin receptor type 2 (Galr2) from Mus musculus (Mouse).